A 309-amino-acid polypeptide reads, in one-letter code: tRNA pseudouridine synthase B (309 aa).

The active-site Nucleophile is the Asp-39.

It belongs to the pseudouridine synthase TruB family. Type 1 subfamily.

The catalysed reaction is uridine(55) in tRNA = pseudouridine(55) in tRNA. Functionally, responsible for synthesis of pseudouridine from uracil-55 in the psi GC loop of transfer RNAs. The chain is tRNA pseudouridine synthase B from Bacillus licheniformis (strain ATCC 14580 / DSM 13 / JCM 2505 / CCUG 7422 / NBRC 12200 / NCIMB 9375 / NCTC 10341 / NRRL NRS-1264 / Gibson 46).